We begin with the raw amino-acid sequence, 233 residues long: Pirin-like protein YhaK (233 aa).

The protein belongs to the pirin family. In terms of assembly, monomer.

The protein localises to the cytoplasm. Its function is as follows. Does not have quercetin 2,3-dioxygenase activity. The chain is Pirin-like protein YhaK (yhaK) from Escherichia coli O157:H7.